Consider the following 469-residue polypeptide: Phosphatidylinositol 4-kinase type 2-beta (469 aa).

The disordered stretch occupies residues 1-84; the sequence is MAEACEPTRP…LDRTRTTSSE (84 aa). The residue at position 37 (S37) is a Phosphoserine. The PI3K/PI4K catalytic domain occupies 108–439; sequence GVFPERISQG…AQMPCVIVEC (332 aa). Positions 114–120 are G-loop; sequence ISQGSSG. S121 and K136 together coordinate ATP. The segment at 141–143 is important for substrate binding; the sequence is EPY. The tract at residues 149 to 162 is important for interaction with membranes; the sequence is KWTKYVHKVCCPCC. ATP-binding positions include 245–248 and 259–260; these read QLFV and RR. The segment at 252 to 260 is important for interaction with membranes; the sequence is KEAEYWLRR. Residues 289-297 are catalytic loop; it reads RNTDRGNDN. The segment at 330–350 is activation loop; it reads AIDNGLAFPFKHPDEWRAYPF. D332 is a binding site for ATP. The tract at residues 345–354 is important for interaction with membranes; sequence WRAYPFHWAW.

The protein belongs to the PI3/PI4-kinase family. Type II PI4K subfamily.

The protein localises to the cytoplasm. It is found in the cytosol. The protein resides in the golgi apparatus membrane. It localises to the endoplasmic reticulum membrane. Its subcellular location is the cell membrane. The protein localises to the early endosome membrane. The enzyme catalyses a 1,2-diacyl-sn-glycero-3-phospho-(1D-myo-inositol) + ATP = a 1,2-diacyl-sn-glycero-3-phospho-(1D-myo-inositol 4-phosphate) + ADP + H(+). Together with PI4K2A and the type III PI4Ks (PIK4CA and PIK4CB) it contributes to the overall PI4-kinase activity of the cell. This contribution may be especially significant in plasma membrane, endosomal and Golgi compartments. The phosphorylation of phosphatidylinositol (PI) to PI4P is the first committed step in the generation of phosphatidylinositol 4,5-bisphosphate (PIP2), a precursor of the second messenger inositol 1,4,5-trisphosphate (InsP3). Contributes to the production of InsP3 in stimulated cells and is likely to be involved in the regulation of vesicular trafficking. This is Phosphatidylinositol 4-kinase type 2-beta (Pi4k2b) from Mus musculus (Mouse).